The chain runs to 117 residues: Non-specific lipid-transfer protein 1 (117 aa).

An N-terminal signal peptide occupies residues 1–26 (MAYSAMTKLALVVALCMVVSVPIAQA). Intrachain disulfides connect C29–C76, C39–C53, C54–C99, and C74–C113.

It belongs to the plant LTP family.

Functionally, plant non-specific lipid-transfer proteins transfer phospholipids as well as galactolipids across membranes. May play a role in wax or cutin deposition in the cell walls of expanding epidermal cells and certain secretory tissues. The protein is Non-specific lipid-transfer protein 1 of Prunus dulcis (Almond).